Here is an 86-residue protein sequence, read N- to C-terminus: Large ribosomal subunit protein bL27 (86 aa).

The interval 1–24 is disordered; the sequence is MAHKKGTGSTRNGRDSNSKRLGVK.

Belongs to the bacterial ribosomal protein bL27 family.

The sequence is that of Large ribosomal subunit protein bL27 from Prochlorococcus marinus (strain MIT 9301).